A 496-amino-acid polypeptide reads, in one-letter code: Glycylpeptide N-tetradecanoyltransferase 1 (496 aa).

A disordered region spans residues M1–N82. S31 and S47 each carry phosphoserine. The span at K55 to E66 shows a compositional bias: basic residues. Residue S83 is modified to Phosphoserine. Tetradecanoyl-CoA is bound by residues Q118, F119, W120, F247, L248, C249, V250, S256, R258, V259, and A260.

Belongs to the NMT family. As to expression, heart, gut, kidney, liver and placenta.

It is found in the cytoplasm. It localises to the cytosol. The protein resides in the membrane. The enzyme catalyses N-terminal glycyl-[protein] + tetradecanoyl-CoA = N-tetradecanoylglycyl-[protein] + CoA + H(+). It carries out the reaction N-terminal glycyl-L-lysyl-[protein] + tetradecanoyl-CoA = N-terminal glycyl-(N(6)-tetradecanoyl)-L-lysyl-[protein] + CoA + H(+). Adds a myristoyl group to the N-terminal glycine residue of certain cellular and viral proteins. Also able to mediate N-terminal lysine myristoylation of proteins: catalyzes myristoylation of ARF6 on both 'Gly-2' and 'Lys-3'. Lysine myristoylation is required to maintain ARF6 on membranes during the GTPase cycle. The protein is Glycylpeptide N-tetradecanoyltransferase 1 of Homo sapiens (Human).